Reading from the N-terminus, the 209-residue chain is Homeobox protein ceh-2 (209 aa).

Residues 1–14 (MTLKFSVERLVDSE) are compositionally biased toward basic and acidic residues. Disordered stretches follow at residues 1–46 (MTLK…KSGK) and 181–209 (HKRV…KSVS). Over residues 15–24 (KESEEADVEE) the composition is skewed to acidic residues. Residues 126 to 185 (NKRIRTAFSASQLIQLEKAFEGNHYVVGNERKQLAAKLSLTETQVKVWFQNRRTKHKRVR) constitute a DNA-binding region (homeobox).

It belongs to the EMX homeobox family. In terms of tissue distribution, in the anterior pharynx, expressed in the I3 interneuron, the NSM and M3 motor neuron pairs, the three m2 muscle cells and the three e2 epithelial cells (at protein level).

Its subcellular location is the nucleus. Its function is as follows. Required for activity of the M3 pharyngeal motor neuron. The chain is Homeobox protein ceh-2 from Caenorhabditis elegans.